The following is a 157-amino-acid chain: Large ribosomal subunit protein uL11 (157 aa).

It belongs to the universal ribosomal protein uL11 family. In terms of assembly, part of the ribosomal stalk of the 50S ribosomal subunit. Interacts with L10 and the large rRNA to form the base of the stalk. L10 forms an elongated spine to which L12 dimers bind in a sequential fashion forming a multimeric L10(L12)X complex.

In terms of biological role, forms part of the ribosomal stalk which helps the ribosome interact with GTP-bound translation factors. The sequence is that of Large ribosomal subunit protein uL11 from Methanocorpusculum labreanum (strain ATCC 43576 / DSM 4855 / Z).